A 376-amino-acid polypeptide reads, in one-letter code: UDP-4-amino-4,6-dideoxy-N-acetyl-beta-L-altrosamine transaminase (376 aa).

Residues Tyr4, 24–27 (EILT), Ala54, and Ser176 contribute to the substrate site. Residue Lys181 is modified to N6-(pyridoxal phosphate)lysine. Residues Asn226 and 311 to 314 (QVHY) each bind substrate.

It belongs to the DegT/DnrJ/EryC1 family.

It catalyses the reaction UDP-4-amino-4,6-dideoxy-N-acetyl-beta-L-altrosamine + 2-oxoglutarate = UDP-2-acetamido-2,6-dideoxy-beta-L-arabino-hex-4-ulose + L-glutamate. Its function is as follows. Catalyzes the second step in the biosynthesis of pseudaminic acid, a sialic-acid-like sugar that is used to modify flagellin. Uses UDP-2-acetamido-2,6-dideoxy-beta-L-arabino-4-hexulose as substrate producing UDP-4-amino-4,6-dideoxy-beta-L-AltNAc. This chain is UDP-4-amino-4,6-dideoxy-N-acetyl-beta-L-altrosamine transaminase (pseC), found in Campylobacter jejuni subsp. jejuni serotype O:23/36 (strain 81-176).